Reading from the N-terminus, the 341-residue chain is Transcription factor VIP1 (341 aa).

3 disordered regions span residues 1–33, 59–106, and 135–156; these read MEGG…HRRA, SLDF…PEAR, and SSGE…DGEM. Residues 1-162 are necessary and sufficient for transient T-DNA transformation end expression; that stretch reads MEGGGRGPNQ…DGEMSSASFN (162 aa). A compositionally biased stretch (basic and acidic residues) spans 15–24; sequence EIEHMPEAPR. The span at 71 to 80 shows a compositional bias: low complexity; the sequence is QSQQQPQASP. The residue at position 79 (S79) is a Phosphoserine. The tract at residues 163–341 is involved in homomultimerization and histone H2A binding; sequence IESILASVSG…PSYMDFTKRG (179 aa). One can recognise a bZIP domain in the interval 194–257; sequence DPKRAKRILA…SELNTENKHL (64 aa). Residues 196–217 form a basic motif region; that stretch reads KRAKRILANRQSAARSKERKIR. The Nuclear localization signal motif lies at 198–205; sequence AKRILANR. The tract at residues 222 to 257 is leucine-zipper; the sequence is LERKVQTLQNEATTLSAQVTMLQRGTSELNTENKHL. A compositionally biased stretch (polar residues) spans 307–331; sequence SQQSAMNQFGNKTNQQMSTNGQPSL. The interval 307 to 341 is disordered; sequence SQQSAMNQFGNKTNQQMSTNGQPSLPSYMDFTKRG.

It belongs to the bZIP family. As to quaternary structure, forms homomultimers. Interacts with Agrobacterium tumefaciens VirE2 and mediates its translocation to the host nucleus. Binds to VIP2. Forms a complex made of Agrobacterium VirE2, VIP1, VIP2 and single-stranded DNA (ssDNA). The interaction with KAP1 mediates its nuclear import. Binds to the H2A histone RAT5. Interacts with MPK3 and Agrobacterium virF. Forms a complex made of VIP1, VBF and Agrobacterium virE2. Interacts with SCF(VBF) E3 ubiquitin ligase complex. Binds directly to VBF. Forms heterodimers with BZIP34 and BZIP61. In terms of processing, phosphorylated by MPK3. This phosphorylation promotes nuclear localization. As to expression, mostly expressed in dividing cells, present in leaves, roots and seedlings.

The protein localises to the cytoplasm. The protein resides in the nucleus. In terms of biological role, transcription activator that binds specifically to the VIP1 response elements (VREs) DNA sequence 5'-ACNGCT-3' found in some stress genes (e.g. TRX8 and MYB44), when phosphorylated/activated by MPK3. Required for Agrobacterium VirE2 nuclear import and tumorigenicity. Promotes transient expression of T-DNA in early stages by interacting with VirE2 in complex with the T-DNA and facilitating its translocation to the nucleus, and mediates stable genetic transformation by Agrobacterium by binding H2A histone. Prevents cell differentiation and shoot formation. Limits sulfate utilization efficiency (SUE) and sulfate uptake, especially in low-sulfur conditions. Plays a role in osmosensory response by binding to the 5'-AGCTGT/G-3' DNA sequence found in the promoters of the hypoosmolarity-responsive genes CYP707A1 and CYP707A3. Involved in the negative regulation of touch-induced root bending and salt-dependent root bending. This chain is Transcription factor VIP1, found in Arabidopsis thaliana (Mouse-ear cress).